We begin with the raw amino-acid sequence, 32 residues long: uncharacterized protein (32 aa).

This is an uncharacterized protein from Saccharomyces cerevisiae (strain ATCC 204508 / S288c) (Baker's yeast).